The chain runs to 463 residues: Peptidylprolyl isomerase cyp7 (463 aa).

One can recognise a PPIase cyclophilin-type domain in the interval 11–166 (ATGTVILKTT…FPPKIISTEV (156 aa)). Residues 224–275 (VKKPLRQKTPVSRSSDTTTELSKDLISSSSSIHSTYSSAQTGLTSAKVSSDE) form a disordered region. Residues 232-243 (TPVSRSSDTTTE) show a composition bias toward polar residues. A compositionally biased stretch (low complexity) spans 250–261 (SSSSSIHSTYSS). Residues 262-271 (AQTGLTSAKV) are compositionally biased toward polar residues.

The protein belongs to the cyclophilin-type PPIase family. CWC27 subfamily. Belongs to the 40S cdc5-associated complex (or cwf complex), a spliceosome sub-complex reminiscent of a late-stage spliceosome composed of the U2, U5 and U6 snRNAs and at least brr2, cdc5, cwf2/prp3, cwf3/syf1, cwf4/syf3, cwf5/ecm2, spp42/cwf6, cwf7/spf27, cwf8, cwf9, cwf10, cwf11, cwf12, prp45/cwf13, cwf14, cwf15, cwf16, cwf17, cwf18, cwf19, cwf20, cwf21, cwf22, cwf23, cwf24, cwf25, cwf26, cyp7/cwf27, cwf28, cwf29/ist3, lea1, msl1, prp5/cwf1, prp10, prp12/sap130, prp17, prp22, sap61, sap62, sap114, sap145, slu7, smb1, smd1, smd3, smf1, smg1 and syf2.

It localises to the cytoplasm. It is found in the nucleus. It catalyses the reaction [protein]-peptidylproline (omega=180) = [protein]-peptidylproline (omega=0). PPIases accelerate the folding of proteins. Catalyzes the cis-trans isomerization of proline imidic peptide bonds in oligopeptides. Involved in pre-mRNA splicing. This Schizosaccharomyces pombe (strain 972 / ATCC 24843) (Fission yeast) protein is Peptidylprolyl isomerase cyp7 (cyp7).